A 319-amino-acid polypeptide reads, in one-letter code: Vomeronasal type-1 receptor 51 (319 aa).

Topologically, residues 1–31 are extracellular; it reads MNEILFFSPQPLFSHMMNENSRVHTHSNLRH. A helical transmembrane segment spans residues 32–52; sequence IFFSEIGIGISGNSFLLLFHI. Topologically, residues 53–65 are cytoplasmic; sequence LKFIHGHRSRLSD. A helical transmembrane segment spans residues 66–86; it reads LPIGLLSLIHLLMLLVMAFIA. Over 87–109 the chain is Extracellular; the sequence is TDIFISWRGWDDIICKFLVYLYR. A disulfide bridge links C101 with C188. The helical transmembrane segment at 110–130 threads the bilayer; sequence VLRGLSLCTTSMLSVLQAIIL. Over 131 to 150 the chain is Cytoplasmic; it reads SPRSSCLAKFKRKSLHHISC. The chain crosses the membrane as a helical span at residues 151 to 171; sequence AILFLSVLYMLIGSQLLVSII. Topologically, residues 172–203 are extracellular; that stretch reads ATPNLTTNDFIYVTQSCSILPLSYVMQSMFST. An N-linked (GlcNAc...) asparagine glycan is attached at N175. The chain crosses the membrane as a helical span at residues 204–224; sequence LLVIRDVFLISLMVLSTWYMV. Residues 225–254 lie on the Cytoplasmic side of the membrane; it reads ALLCRHRKKTQHLQGISLSPKTSPKQRATQ. Residues 255–275 form a helical membrane-spanning segment; the sequence is TLLMLMSFFVLMTIYDTIVSC. Over 276–285 the chain is Extracellular; it reads SRTMFLNDPT. Residues 286-306 form a helical membrane-spanning segment; that stretch reads SYNMQIFVVHIYATVSPFVFM. The Cytoplasmic portion of the chain corresponds to 307-319; it reads STEKHIVNCLRSV.

This sequence belongs to the G-protein coupled receptor 1 family. In terms of tissue distribution, expressed in a subset of sensory neurons located in the apical layer of the vomeronasal organ.

It localises to the cell membrane. Putative pheromone receptor implicated in the regulation of social as well as reproductive behavior. This is Vomeronasal type-1 receptor 51 (Vmn1r51) from Mus musculus (Mouse).